The following is a 281-amino-acid chain: 2-dehydro-3-deoxyphosphooctonate aldolase (281 aa).

The protein belongs to the KdsA family.

The protein localises to the cytoplasm. It carries out the reaction D-arabinose 5-phosphate + phosphoenolpyruvate + H2O = 3-deoxy-alpha-D-manno-2-octulosonate-8-phosphate + phosphate. It participates in carbohydrate biosynthesis; 3-deoxy-D-manno-octulosonate biosynthesis; 3-deoxy-D-manno-octulosonate from D-ribulose 5-phosphate: step 2/3. It functions in the pathway bacterial outer membrane biogenesis; lipopolysaccharide biosynthesis. In Pseudomonas syringae pv. tomato (strain ATCC BAA-871 / DC3000), this protein is 2-dehydro-3-deoxyphosphooctonate aldolase.